A 362-amino-acid polypeptide reads, in one-letter code: tRNA/tmRNA (uracil-C(5))-methyltransferase (362 aa).

Gln186, Tyr214, Asn219, Glu235, and Asp295 together coordinate S-adenosyl-L-methionine. Residue Cys320 is the Nucleophile of the active site. The active-site Proton acceptor is Glu354.

Belongs to the class I-like SAM-binding methyltransferase superfamily. RNA M5U methyltransferase family. TrmA subfamily.

The enzyme catalyses uridine(54) in tRNA + S-adenosyl-L-methionine = 5-methyluridine(54) in tRNA + S-adenosyl-L-homocysteine + H(+). The catalysed reaction is uridine(341) in tmRNA + S-adenosyl-L-methionine = 5-methyluridine(341) in tmRNA + S-adenosyl-L-homocysteine + H(+). In terms of biological role, dual-specificity methyltransferase that catalyzes the formation of 5-methyluridine at position 54 (m5U54) in all tRNAs, and that of position 341 (m5U341) in tmRNA (transfer-mRNA). This is tRNA/tmRNA (uracil-C(5))-methyltransferase from Ectopseudomonas mendocina (strain ymp) (Pseudomonas mendocina).